The following is a 155-amino-acid chain: MTSHDQSYRAGEAKGRTEEKTNQMIGNIEDKAQAAKEKAQQAAQTAKDKTSQTAQAAKEKTQQTAQAAKDKTQQTTQATKEKAQDTTGRAKEKGSEMGQSTKETAQSGKDNSAGFLQQTGEKAKGMAQGATDAVKQTFGMTNDDQDKDHFPTNRH.

A disordered region spans residues 1–155 (MTSHDQSYRA…DKDHFPTNRH (155 aa)). Composition is skewed to basic and acidic residues over residues 11-21 (GEAKGRTEEKT) and 28-39 (IEDKAQAAKEKA). Over residues 40–78 (QQAAQTAKDKTSQTAQAAKEKTQQTAQAAKDKTQQTTQA) the composition is skewed to low complexity. 2 tandem repeats follow at residues 53-63 (TAQAAKEKTQQ) and 64-74 (TAQAAKDKTQQ). Positions 53–74 (TAQAAKEKTQQTAQAAKDKTQQ) are 2 X 11 AA approximate tandem repeats of T-A-Q-A-A-K-E-K-T-Q-Q. Residues 79–95 (TKEKAQDTTGRAKEKGS) show a composition bias toward basic and acidic residues. A compositionally biased stretch (polar residues) spans 97–120 (MGQSTKETAQSGKDNSAGFLQQTG). Basic and acidic residues predominate over residues 144–155 (DQDKDHFPTNRH).

This sequence belongs to the LEA type 4 family. In terms of tissue distribution, highest expression is found in seeds. No expression detected in adult tissues.

In Cicer arietinum (Chickpea), this protein is Late embryogenesis abundant protein 2.